A 750-amino-acid chain; its full sequence is Photosystem I P700 chlorophyll a apoprotein A1 (750 aa).

The next 8 membrane-spanning stretches (helical) occupy residues 70 to 93 (VFSA…FHGA), 156 to 179 (LYCT…FHYH), 195 to 219 (LNHH…HVSL), 291 to 309 (IAHH…GHMY), 346 to 369 (WHAQ…HHMY), 385 to 411 (LSLF…IFMV), 433 to 455 (AIIS…LYIH), and 531 to 549 (FLVH…LILL). Positions 573 and 582 each coordinate [4Fe-4S] cluster. Transmembrane regions (helical) follow at residues 589–610 (HVFL…HFSW) and 664–686 (LSAY…MFLF). His-675 provides a ligand contact to chlorophyll a'. Residues Met-683 and Tyr-691 each contribute to the chlorophyll a site. Trp-692 contacts phylloquinone. A helical membrane pass occupies residues 724–744 (AVGVTHYLLGGIATTWAFFLA).

It belongs to the PsaA/PsaB family. As to quaternary structure, the PsaA/B heterodimer binds the P700 chlorophyll special pair and subsequent electron acceptors. PSI consists of a core antenna complex that captures photons, and an electron transfer chain that converts photonic excitation into a charge separation. The eukaryotic PSI reaction center is composed of at least 11 subunits. P700 is a chlorophyll a/chlorophyll a' dimer, A0 is one or more chlorophyll a, A1 is one or both phylloquinones and FX is a shared 4Fe-4S iron-sulfur center. serves as cofactor.

Its subcellular location is the plastid. It is found in the chloroplast thylakoid membrane. It carries out the reaction reduced [plastocyanin] + hnu + oxidized [2Fe-2S]-[ferredoxin] = oxidized [plastocyanin] + reduced [2Fe-2S]-[ferredoxin]. Its function is as follows. PsaA and PsaB bind P700, the primary electron donor of photosystem I (PSI), as well as the electron acceptors A0, A1 and FX. PSI is a plastocyanin-ferredoxin oxidoreductase, converting photonic excitation into a charge separation, which transfers an electron from the donor P700 chlorophyll pair to the spectroscopically characterized acceptors A0, A1, FX, FA and FB in turn. Oxidized P700 is reduced on the lumenal side of the thylakoid membrane by plastocyanin. This is Photosystem I P700 chlorophyll a apoprotein A1 from Agrostis stolonifera (Creeping bentgrass).